The chain runs to 218 residues: Capsid protein (218 aa).

An N-acetylmethionine; by host modification is found at M1. The span at 1-10 shows a compositional bias: low complexity; the sequence is MDKSESTSAG. A disordered region spans residues 1-30; it reads MDKSESTSAGRNRRRRPRRGSRSASSSADA. The span at 11 to 21 shows a compositional bias: basic residues; sequence RNRRRRPRRGS.

It belongs to the cucumovirus capsid protein family.

It is found in the virion. Its function is as follows. Capsid protein. Probably binds RNA and plays a role in packaging. The protein is Capsid protein of Cucumber mosaic virus (strain P6) (CMV).